Reading from the N-terminus, the 919-residue chain is Alanine--tRNA ligase (919 aa).

4 residues coordinate Zn(2+): His-565, His-569, Cys-667, and His-671.

Belongs to the class-II aminoacyl-tRNA synthetase family. The cofactor is Zn(2+).

It localises to the cytoplasm. It catalyses the reaction tRNA(Ala) + L-alanine + ATP = L-alanyl-tRNA(Ala) + AMP + diphosphate. In terms of biological role, catalyzes the attachment of alanine to tRNA(Ala) in a two-step reaction: alanine is first activated by ATP to form Ala-AMP and then transferred to the acceptor end of tRNA(Ala). Also edits incorrectly charged Ser-tRNA(Ala) and Gly-tRNA(Ala) via its editing domain. This is Alanine--tRNA ligase from Leptospira biflexa serovar Patoc (strain Patoc 1 / Ames).